The primary structure comprises 206 residues: Putative metal transport protein HI_1621 (206 aa).

The next 6 membrane-spanning stretches (helical) occupy residues 6 to 26, 38 to 58, 72 to 92, 94 to 114, 136 to 156, and 165 to 185; these read GVLHTPILLAGAVLAVAGIAV, LTALFAAAFFVAGTIHVPVGI, FLGWAVFPAFLIALLLQVIFF, FGGFAVLGVNLCVMATPAVIA, IGAGVIGVGGAGALASFVLML, and LVWLLLVSHIPVFILDSIISV.

It belongs to the CbiM family.

The protein localises to the cell membrane. May be involved in metal transport. This chain is Putative metal transport protein HI_1621, found in Haemophilus influenzae (strain ATCC 51907 / DSM 11121 / KW20 / Rd).